The chain runs to 419 residues: GTPase Obg (419 aa).

Residues 1–156 (MRFVDYVSIE…FYLDLQLKVM (156 aa)) enclose the Obg domain. In terms of domain architecture, OBG-type G spans 157 to 334 (ADIGLVGKPN…LGEKQKKLEI (178 aa)). GTP-binding positions include 163-170 (GKPNAGKS), 188-192 (FTTLA), 209-212 (DLPG), 278-281 (NKCD), and 315-317 (NII). Mg(2+) contacts are provided by Ser-170 and Thr-190. An OCT domain is found at 342-419 (IEFNLKAPFL…RIYEFEFHWN (78 aa)).

It belongs to the TRAFAC class OBG-HflX-like GTPase superfamily. OBG GTPase family. In terms of assembly, monomer. Requires Mg(2+) as cofactor.

It is found in the cytoplasm. Its function is as follows. An essential GTPase which binds GTP, GDP and possibly (p)ppGpp with moderate affinity, with high nucleotide exchange rates and a fairly low GTP hydrolysis rate. Plays a role in control of the cell cycle, stress response, ribosome biogenesis and in those bacteria that undergo differentiation, in morphogenesis control. This Mesomycoplasma hyopneumoniae (strain J / ATCC 25934 / NCTC 10110) (Mycoplasma hyopneumoniae) protein is GTPase Obg.